Consider the following 348-residue polypeptide: Protein RecA (348 aa).

Position 64-71 (64-71 (GPESSGKT)) interacts with ATP.

The protein belongs to the RecA family.

The protein localises to the cytoplasm. Functionally, can catalyze the hydrolysis of ATP in the presence of single-stranded DNA, the ATP-dependent uptake of single-stranded DNA by duplex DNA, and the ATP-dependent hybridization of homologous single-stranded DNAs. It interacts with LexA causing its activation and leading to its autocatalytic cleavage. The polypeptide is Protein RecA (Blastochloris viridis (Rhodopseudomonas viridis)).